The chain runs to 124 residues: MQRLMLKSKIHRARVTEANLHYEGSLTIDETLMKAADILPYEQIKVYNVFNGARFDTYAIAGPAGSGVFCLNGAAARMGAAGDLIIIATYAQYDEAEIARHQPKVVLLDGDNRPLSQGLKACLS.

Ser-25 functions as the Schiff-base intermediate with substrate; via pyruvic acid in the catalytic mechanism. A Pyruvic acid (Ser) modification is found at Ser-25. Thr-57 is a substrate binding site. Residue Tyr-58 is the Proton donor of the active site. A substrate-binding site is contributed by 73–75; it reads GAA.

Belongs to the PanD family. Heterooctamer of four alpha and four beta subunits. Requires pyruvate as cofactor. Is synthesized initially as an inactive proenzyme, which is activated by self-cleavage at a specific serine bond to produce a beta-subunit with a hydroxyl group at its C-terminus and an alpha-subunit with a pyruvoyl group at its N-terminus.

The protein resides in the cytoplasm. It carries out the reaction L-aspartate + H(+) = beta-alanine + CO2. It participates in cofactor biosynthesis; (R)-pantothenate biosynthesis; beta-alanine from L-aspartate: step 1/1. In terms of biological role, catalyzes the pyruvoyl-dependent decarboxylation of aspartate to produce beta-alanine. This is Aspartate 1-decarboxylase from Syntrophobacter fumaroxidans (strain DSM 10017 / MPOB).